The chain runs to 134 residues: Global transcriptional regulator Spx (134 aa).

Cys-10 and Cys-13 are oxidised to a cystine.

Belongs to the ArsC family. Spx subfamily. As to quaternary structure, interacts with the C-terminal domain of the alpha subunit of the RNAP.

The protein localises to the cytoplasm. Global transcriptional regulator that plays a key role in stress response and exerts either positive or negative regulation of genes. Acts by interacting with the C-terminal domain of the alpha subunit of the RNA polymerase (RNAP). This interaction can enhance binding of RNAP to the promoter region of target genes and stimulate their transcription, or block interaction of RNAP with activator. This is Global transcriptional regulator Spx from Streptococcus pyogenes serotype M1.